The primary structure comprises 646 residues: Acetyl-coenzyme A synthetase (646 aa).

Residues 190-193 (RAGN) and Thr309 contribute to the CoA site. Residues 385–387 (GEP), 409–414 (DTWWQT), Asp498, and Arg513 contribute to the ATP site. Ser521 provides a ligand contact to CoA. An ATP-binding site is contributed by Arg524. Val535, His537, and Val540 together coordinate Mg(2+). CoA is bound at residue Arg582. Position 607 is an N6-acetyllysine (Lys607).

The protein belongs to the ATP-dependent AMP-binding enzyme family. The cofactor is Mg(2+). Acetylated. Deacetylation by the SIR2-homolog deacetylase activates the enzyme.

The enzyme catalyses acetate + ATP + CoA = acetyl-CoA + AMP + diphosphate. Functionally, catalyzes the conversion of acetate into acetyl-CoA (AcCoA), an essential intermediate at the junction of anabolic and catabolic pathways. AcsA undergoes a two-step reaction. In the first half reaction, AcsA combines acetate with ATP to form acetyl-adenylate (AcAMP) intermediate. In the second half reaction, it can then transfer the acetyl group from AcAMP to the sulfhydryl group of CoA, forming the product AcCoA. This Pseudoalteromonas translucida (strain TAC 125) protein is Acetyl-coenzyme A synthetase.